A 427-amino-acid polypeptide reads, in one-letter code: SAC3 domain-containing protein 1 (427 aa).

Basic and acidic residues-rich tracts occupy residues 1–10 (MGRFKGENRS) and 117–127 (ADPKRTVKEYS). Disordered stretches follow at residues 1-53 (MGRF…QDAV) and 101-143 (LHRL…LLRP). The segment covering 134 to 143 (PRPPPSLLRP) has biased composition (pro residues). The region spanning 229–397 (QVQEGFGSLR…EGLPPPGAYH (169 aa)) is the PCI domain. S425 bears the Phosphoserine mark.

It belongs to the SAC3 family. As to quaternary structure, may be part of a SEM1-containing complex. Present in spleen cells (at protein level).

It localises to the cytoplasm. Its subcellular location is the cytoskeleton. The protein localises to the microtubule organizing center. It is found in the centrosome. The protein resides in the spindle. Its function is as follows. Involved in centrosome duplication and mitotic progression. The sequence is that of SAC3 domain-containing protein 1 (Sac3d1) from Mus musculus (Mouse).